The primary structure comprises 248 residues: ATP synthase subunit a (248 aa).

The next 6 helical transmembrane spans lie at 34-54 (TNAT…LVFG), 91-111 (YFPY…LGLL), 121-141 (IAVT…LGFV), 147-167 (FLGL…LAVI), 196-216 (VFAA…AITA), and 220-240 (LEVL…CVYL).

It belongs to the ATPase A chain family. F-type ATPases have 2 components, CF(1) - the catalytic core - and CF(0) - the membrane proton channel. CF(1) has five subunits: alpha(3), beta(3), gamma(1), delta(1), epsilon(1). CF(0) has three main subunits: a(1), b(2) and c(9-12). The alpha and beta chains form an alternating ring which encloses part of the gamma chain. CF(1) is attached to CF(0) by a central stalk formed by the gamma and epsilon chains, while a peripheral stalk is formed by the delta and b chains.

The protein localises to the cell inner membrane. Key component of the proton channel; it plays a direct role in the translocation of protons across the membrane. The protein is ATP synthase subunit a of Paracoccus denitrificans (strain Pd 1222).